The following is a 375-amino-acid chain: Alanine racemase (375 aa).

Lys40 functions as the Proton acceptor; specific for D-alanine in the catalytic mechanism. Lys40 bears the N6-(pyridoxal phosphate)lysine mark. Arg140 lines the substrate pocket. Tyr268 (proton acceptor; specific for L-alanine) is an active-site residue. Met315 contributes to the substrate binding site.

It belongs to the alanine racemase family. It depends on pyridoxal 5'-phosphate as a cofactor.

The catalysed reaction is L-alanine = D-alanine. It participates in amino-acid biosynthesis; D-alanine biosynthesis; D-alanine from L-alanine: step 1/1. In terms of biological role, catalyzes the interconversion of L-alanine and D-alanine. May also act on other amino acids. The protein is Alanine racemase (alr) of Limosilactobacillus reuteri (strain DSM 20016) (Lactobacillus reuteri).